The primary structure comprises 363 residues: Probable methyltransferase-like protein 24 (363 aa).

An N-terminal signal peptide occupies residues 1–38; the sequence is MGTAKPPGRGCGALPRWLLGAALLLGLRLCMELRHAGS. Residues 37-62 are disordered; sequence GSGPPGRRDLRGPPRTHLLPAPGPLR.

It belongs to the methyltransferase superfamily.

Its subcellular location is the secreted. In terms of biological role, probable methyltransferase. This is Probable methyltransferase-like protein 24 (Mettl24) from Rattus norvegicus (Rat).